A 709-amino-acid polypeptide reads, in one-letter code: Ribosomal RNA large subunit methyltransferase K/L (709 aa).

The region spanning 43-154 (LAYRITLWTR…NGVITIAMNF (112 aa)) is the THUMP domain.

The protein belongs to the methyltransferase superfamily. RlmKL family.

The protein localises to the cytoplasm. The catalysed reaction is guanosine(2445) in 23S rRNA + S-adenosyl-L-methionine = N(2)-methylguanosine(2445) in 23S rRNA + S-adenosyl-L-homocysteine + H(+). The enzyme catalyses guanosine(2069) in 23S rRNA + S-adenosyl-L-methionine = N(2)-methylguanosine(2069) in 23S rRNA + S-adenosyl-L-homocysteine + H(+). In terms of biological role, specifically methylates the guanine in position 2445 (m2G2445) and the guanine in position 2069 (m7G2069) of 23S rRNA. The protein is Ribosomal RNA large subunit methyltransferase K/L of Shewanella baltica (strain OS155 / ATCC BAA-1091).